Consider the following 1060-residue polypeptide: Positive regulator of purine utilization (1060 aa).

Over residues 1–15 (MLNPSTSDIHTSPTA) the composition is skewed to polar residues. The segment at 1–48 (MLNPSTSDIHTSPTAVGNGRKRPHPIADSGSAMPSDPSAQQLPHPANE) is disordered. The segment at residues 67-94 (CNRCRQRKNRCDQRLPRCQACEKAGVRC) is a DNA-binding region (zn(2)-C6 fungal-type). Disordered stretches follow at residues 163–207 (EIAA…DAED), 251–282 (SVPG…TTRD), 367–391 (AEDQ…SRQY), 811–862 (VQTS…RFDM), and 877–969 (RQGS…PSGM). Composition is skewed to basic and acidic residues over residues 170 to 182 (SNDK…KEKN), 189 to 207 (KASR…DAED), and 260 to 269 (GPSRPKERLP). Positions 272 to 282 (ATGTEGSTTRD) are enriched in polar residues. Positions 367–377 (AEDQKEGRDHS) are enriched in basic and acidic residues. Over residues 811-831 (VQTSTSGSRQFNATQSRSRPY) the composition is skewed to polar residues. Composition is skewed to low complexity over residues 832-859 (SRQQ…PLPR) and 930-952 (PRYY…AASG).

The protein localises to the nucleus. Functionally, mediates the induction of a number of unlinked genes involved in purine utilization. Binds to the consensus sequence 5'-TCGGNNNNNNCCGA-3'. The sequence is that of Positive regulator of purine utilization (uaY) from Emericella nidulans (strain FGSC A4 / ATCC 38163 / CBS 112.46 / NRRL 194 / M139) (Aspergillus nidulans).